The following is a 1090-amino-acid chain: Protein unc-13 homolog D (1090 aa).

The C2 1 domain occupies 92 to 239 (EPEEHQQTLQ…FKEARKDKGQ (148 aa)). Ca(2+)-binding residues include D127 and D133. A Phosphoserine modification is found at S150. Ca(2+) is bound by residues D206 and D208. The interaction with RAB27A stretch occupies residues 240–543 (DDFLGNVVLR…AKRVQDHTTV (304 aa)). The 121-residue stretch at 557-677 (FQLYISLKEL…RLALVYCSLI (121 aa)) folds into the MHD1 domain. The region spanning 788–895 (EDAILPLMKF…ASSRELIRKY (108 aa)) is the MHD2 domain. Residues 910–1035 (ELGAVTVKAS…PGLSGSEEPG (126 aa)) form the C2 2 domain. Ca(2+) is bound by residues L940, D941, D947, D1005, D1007, and D1013. Residues 1026–1048 (PGLSGSEEPGEVPQTRLPLTYPA) form a disordered region.

The protein belongs to the unc-13 family. Interacts with DOC2A. Interacts with RAB27A. Interacts with RHOG; the interaction increases RhoG affinity to the membrane lipids, targets UNC13D to membrane lipids and facilitates cytotoxic granule (CG) docking to the plasma membrane. Ca(2+) is required as a cofactor. Expressed at high levels in spleen, thymus and leukocytes. Also expressed in lung and placenta, and at very low levels in brain, heart, skeletal muscle and kidney. Expressed in cytotoxic T-lymphocytes (CTL) and mast cells.

The protein localises to the cytoplasm. The protein resides in the membrane. Its subcellular location is the late endosome. It is found in the recycling endosome. It localises to the lysosome. Plays a role in cytotoxic granule exocytosis in lymphocytes. Required for both granule maturation and granule docking and priming at the immunologic synapse. Regulates assembly of recycling and late endosomal structures, leading to the formation of an endosomal exocytic compartment that fuses with perforin-containing granules at the immunologic synapse and licences them for exocytosis. Regulates Ca(2+)-dependent secretory lysosome exocytosis in mast cells. In Homo sapiens (Human), this protein is Protein unc-13 homolog D (UNC13D).